The sequence spans 227 residues: Cytidylate kinase (227 aa).

12 to 20 (GPSGAGKGT) provides a ligand contact to ATP.

Belongs to the cytidylate kinase family. Type 1 subfamily.

Its subcellular location is the cytoplasm. The catalysed reaction is CMP + ATP = CDP + ADP. The enzyme catalyses dCMP + ATP = dCDP + ADP. In Salmonella arizonae (strain ATCC BAA-731 / CDC346-86 / RSK2980), this protein is Cytidylate kinase.